The primary structure comprises 454 residues: Chromosomal replication initiator protein DnaA (454 aa).

Residues 1–77 (MASLNENQKF…GFEVFGRMID (77 aa)) form a domain I, interacts with DnaA modulators region. Residues 77-115 (DYELYANDELTDIELRRLNNQSPVDEPLSVAKPTSPLVS) form a domain II region. Residues 116-332 (GLNEKYNFEN…GALNRVEFVA (217 aa)) are domain III, AAA+ region. ATP contacts are provided by G160, G162, K163, and T164. Residues 333 to 454 (RANGISIVDI…KDIDSIKRKF (122 aa)) form a domain IV, binds dsDNA region.

It belongs to the DnaA family. Oligomerizes as a right-handed, spiral filament on DNA at oriC.

The protein localises to the cytoplasm. In terms of biological role, plays an essential role in the initiation and regulation of chromosomal replication. ATP-DnaA binds to the origin of replication (oriC) to initiate formation of the DNA replication initiation complex once per cell cycle. Binds the DnaA box (a 9 base pair repeat at the origin) and separates the double-stranded (ds)DNA. Forms a right-handed helical filament on oriC DNA; dsDNA binds to the exterior of the filament while single-stranded (ss)DNA is stabiized in the filament's interior. The ATP-DnaA-oriC complex binds and stabilizes one strand of the AT-rich DNA unwinding element (DUE), permitting loading of DNA polymerase. After initiation quickly degrades to an ADP-DnaA complex that is not apt for DNA replication. Binds acidic phospholipids. The sequence is that of Chromosomal replication initiator protein DnaA from Lactococcus lactis subsp. cremoris (strain MG1363).